Here is a 517-residue protein sequence, read N- to C-terminus: MIPRLPRYFLKYFIIFTFFCVTFCFLKLCLGENGVEKKNHKTIEAYQYTHTFIHSAYYYPKSKSLGENAVVLVTTMNKRTMWKILDYKINMIGTNQSTHHTTRASLSTEHRIIERCDYMLIIAQTNSIDNMDKLEIEAEGVLVEIPYKKPIYIAPKPVIFCVSPQFAAEQWQTFLVQLHVSKRYGAHLQLYIVSMVESYFNLISEYEKMGLVSIEPWLTIKFSSTDGPYLEPNRNVELRNQAGAHTDCLLKYKESASFIGSLDMDDILIPNNANSYYEEFEREYAGSQFISALHYDKYDYKTIKVSELRSQSLSAIVKNAERLSTKDTGKSFVRPERFNSTWSHWSRAAQKKPIYLDGYEKPILRELKTISNNGMFHLKNMYLTEFNDLGIGQIPLNPTDNVTQLIEREHLAEIDADMKRMLSMPSISKLADSLPKEEFYMPIIFKCYNESFYHLRDTNQMRPDILCVNAYSCDLPQQVGNRCVHSDATYHSGPPMWPISFHFATNSFFSRDIGCYQ.

The chain crosses the membrane as a helical span at residues F9–G31. Positions K156–H454 constitute a GT92 domain.

It belongs to the glycosyltransferase 92 family.

Its subcellular location is the membrane. The polypeptide is Glycosyltransferase family 92 protein F55C10.4 (Caenorhabditis elegans).